We begin with the raw amino-acid sequence, 886 residues long: Vam6/Vps39-like protein (886 aa).

Positions 15 to 294 (PLQIDCLAAW…RFITSGGSNI (280 aa)) constitute a CNH domain. The stretch at 573–750 (FTEDLPEVES…LLRMYLSPPS (178 aa)) is one CHCR repeat.

It belongs to the VAM6/VPS39 family. Homooligomer. Interacts with TGFBR2 and, less efficiently, with TGFBR1; interaction with TGFBR2 is independent of the receptor kinase activity and of the presence of TGF-beta. Also interacts with ACVR2B, but not with BMPR2. Interacts with SMAD4, preferentially following TGF-beta treatment. Does not interact with SAMD2 or SMAD3. Component of the homotypic fusion and vacuole protein sorting (HOPS) complex; the core of which composed of the class C Vps proteins VPS11, VPS16, VPS18 and VPS33A, is associated with VPS39 and VPS41. Interacts with PLEKHM2; involved in VPS39 recruitment to ARL8B-containing lysosomes. Associates with adapter protein complex 3 (AP-3) and clathrin:AP-3 complexes. Interacts with STX17; this interaction is increased in the absence of TMEM39A. Interacts with RAB7, RAB2A and RAB2B. Interacts with RAB2A (GTP-bound); the interaction contributes to obtaining a functional HOPS complex that promotes autophagosome-lysosome membrane fusion driven by STX17-SNAP29-VAMP8. Interacts with RAB39A (GTP-bound) and RAB39B (GTP-bound); interaction with RAB39A contributes to obtaining a functional HOPS complex. In terms of assembly, (Microbial infection) Interacts with SARS coronavirus-2/SARS-CoV-2 ORF3A protein; the interaction is direct and sequestrates VPS39, thereby preventing HOPS complex from interacting with the autophagosomal SNARE protein STX17. ORF3A enhances the interaction of VPS39 with VPS11 and VPS18, while its interaction with the VPS16:VPS33A module is attenuated. As to expression, widely expressed, with highest levels in heart, skeletal muscle, kidney, pancreas, brain, placenta and spleen.

Its subcellular location is the cytoplasm. The protein resides in the lysosome membrane. The protein localises to the late endosome membrane. Its function is as follows. Regulator of TGF-beta/activin signaling, inhibiting SMAD3- and activating SMAD2-dependent transcription. Acts by interfering with SMAD3/SMAD4 complex formation, this would lead to inhibition of SMAD3-dependent transcription and relieve SMAD3 inhibition of SMAD2-dependent promoters, thus increasing SMAD2-dependent transcription. Does not affect TGF-beta-induced SMAD2 or SMAD3 phosphorylation, nor SMAD2/SMAD4 complex formation. Functionally, plays a role in vesicle-mediated protein trafficking to lysosomal compartments including the endocytic membrane transport and autophagic pathways. Acts as a component of the HOPS endosomal tethering complex. This complex is proposed to be involved in the Rab5-to-Rab7 endosome conversion probably implicating MON1A/B, and via binding SNAREs and SNARE complexes to mediate tethering and docking events during SNARE-mediated membrane fusion. The HOPS complex is proposed to be recruited to Rab7 on the late endosomal membrane and to regulate late endocytic, phagocytic and autophagic traffic towards lysosomes. Involved in homotypic vesicle fusions between late endosomes and in heterotypic fusions between late endosomes and lysosomes. Required for fusion of endosomes and autophagosomes with lysosomes. The protein is Vam6/Vps39-like protein of Homo sapiens (Human).